Consider the following 616-residue polypeptide: Chaperone protein HscA homolog (616 aa).

It belongs to the heat shock protein 70 family.

Its function is as follows. Chaperone involved in the maturation of iron-sulfur cluster-containing proteins. Has a low intrinsic ATPase activity which is markedly stimulated by HscB. The sequence is that of Chaperone protein HscA homolog from Histophilus somni (strain 129Pt) (Haemophilus somnus).